Consider the following 349-residue polypeptide: MSNKPSLSYKDAGVDIDAGDALVQRIKSVAKATSRPEVVGGLGGFGALCRIPTGYTSPLLVSGTDGVGTKLKLALQLNRHDTIGIDLVAMCVNDLLVCGAEPLFFLDYYATGKLDVDVAATVVTGIGEGCKLSNCALIGGETAEMPGMYQDDDYDLAGFCVGVVEEAEVITGENVTEGDVLIALASSGAHSNGYSLVRKVIEVSGVDVTSSNEQLDGQSIQDALMAPTRIYVKAIKALQDTLGSSALHAMSHITGGGLTDNLPRVLPDHLAASIDTSSWQFSELFTWLQTQGNIEQSEMYRTFNCGVGFVIVVPKDKADAAIKTLTDAGEKAWKLGEMVSREADAVVYR.

It belongs to the AIR synthase family.

It localises to the cytoplasm. The catalysed reaction is 2-formamido-N(1)-(5-O-phospho-beta-D-ribosyl)acetamidine + ATP = 5-amino-1-(5-phospho-beta-D-ribosyl)imidazole + ADP + phosphate + H(+). It functions in the pathway purine metabolism; IMP biosynthesis via de novo pathway; 5-amino-1-(5-phospho-D-ribosyl)imidazole from N(2)-formyl-N(1)-(5-phospho-D-ribosyl)glycinamide: step 2/2. The chain is Phosphoribosylformylglycinamidine cyclo-ligase from Psychrobacter arcticus (strain DSM 17307 / VKM B-2377 / 273-4).